Here is a 235-residue protein sequence, read N- to C-terminus: Pyridoxine 5'-phosphate synthase (235 aa).

Asparagine 6 is a 3-amino-2-oxopropyl phosphate binding site. Position 8–9 (8–9 (DH)) interacts with 1-deoxy-D-xylulose 5-phosphate. Arginine 17 contributes to the 3-amino-2-oxopropyl phosphate binding site. The Proton acceptor role is filled by histidine 42. 2 residues coordinate 1-deoxy-D-xylulose 5-phosphate: arginine 44 and histidine 49. Glutamate 69 functions as the Proton acceptor in the catalytic mechanism. A 1-deoxy-D-xylulose 5-phosphate-binding site is contributed by threonine 99. The active-site Proton donor is the histidine 189. 3-amino-2-oxopropyl phosphate contacts are provided by residues glycine 190 and 211–212 (GH).

Belongs to the PNP synthase family. Homooctamer; tetramer of dimers.

The protein localises to the cytoplasm. It carries out the reaction 3-amino-2-oxopropyl phosphate + 1-deoxy-D-xylulose 5-phosphate = pyridoxine 5'-phosphate + phosphate + 2 H2O + H(+). It functions in the pathway cofactor biosynthesis; pyridoxine 5'-phosphate biosynthesis; pyridoxine 5'-phosphate from D-erythrose 4-phosphate: step 5/5. In terms of biological role, catalyzes the complicated ring closure reaction between the two acyclic compounds 1-deoxy-D-xylulose-5-phosphate (DXP) and 3-amino-2-oxopropyl phosphate (1-amino-acetone-3-phosphate or AAP) to form pyridoxine 5'-phosphate (PNP) and inorganic phosphate. This Chlorobium phaeovibrioides (strain DSM 265 / 1930) (Prosthecochloris vibrioformis (strain DSM 265)) protein is Pyridoxine 5'-phosphate synthase.